Consider the following 67-residue polypeptide: Arasin 2 (67 aa).

The N-terminal stretch at 1–25 (MERRTLLVVLLVCSCVVAAAAEASP) is a signal peptide. The disordered stretch occupies residues 22–44 (EASPSRWPSPGRPRPFPGRPNPI). Over residues 31–44 (PGRPRPFPGRPNPI) the composition is skewed to pro residues. Cystine bridges form between C50–C59 and C52–C57.

In terms of assembly, interacts with chitin through the N-terminal region (26-48). This interaction may be important, since chitin is a component of the fungal cell wall, as well as of the crab exoskeleton (permitting a possible action of arasin in wound healing in case of lesions). In terms of processing, disulfide bonds are important for activity especially against Gram-negative bacteria, since the linearization of the peptide causes a strong decrease of activity on these bacteria. Mainly expressed in hemocytes. No or very low expression in heart, gills, inestines, and epidermis.

Antimicrobial peptide that has a large activity spectrum with activity against Gram-positive, Gram-negative bacteria, as well as against fungi. Shows activity at micromolar concentrations. Displays minimal inhibitory concentration (MIC) values lower than minimal bactericidal concentrations (MBC). May have a dual mode of action depending on the peptide concentrations. At MIC concentrations, the peptide penetrates into the cytoplasm of target cells (tested on the Gram-negative E.coli). The two inner membrane proteins YgdD and SbmA may be required for this uptake. At concentrations higher than MIC, arasin may act by disrupting membranes. Does not show hemolytic activity. This Hyas araneus (Atlantic lyre crab) protein is Arasin 2.